Here is a 333-residue protein sequence, read N- to C-terminus: Foldase protein PrsA (333 aa).

A signal peptide spans 1–22; it reads MKKSTKLLAGIVTLASAMTLAA. Cys23 is lipidated: N-palmitoyl cysteine. The S-diacylglycerol cysteine moiety is linked to residue Cys23. The region spanning 145-240 is the PpiC domain; the sequence is TPEMTTQVIT…NKFYIVKVTK (96 aa). The interval 301-333 is disordered; the sequence is DKKASKANTSKSDQKTSSDSSKDSQSSKSKSEK. The span at 312-322 shows a compositional bias: basic and acidic residues; sequence SDQKTSSDSSK. Residues 323-333 are compositionally biased toward low complexity; the sequence is DSQSSKSKSEK.

Belongs to the PrsA family.

The protein resides in the cell membrane. It carries out the reaction [protein]-peptidylproline (omega=180) = [protein]-peptidylproline (omega=0). Functionally, plays a major role in protein secretion by helping the post-translocational extracellular folding of several secreted proteins. In Streptococcus equi subsp. zooepidemicus (strain MGCS10565), this protein is Foldase protein PrsA.